We begin with the raw amino-acid sequence, 331 residues long: Cilia- and flagella-associated protein 119 (331 aa).

Serine 34 carries the phosphoserine modification. 2 disordered regions span residues 236-271 and 309-331; these read LWPE…PEPE and SSKL…SKTK. A coiled-coil region spans residues 286-317; sequence VNKELEQLQGLVEERLKASEERLSSKLTALER.

Its subcellular location is the cell projection. The protein resides in the cilium. The protein localises to the flagellum. It localises to the cytoplasmic vesicle. It is found in the secretory vesicle. Its subcellular location is the acrosome. The protein resides in the cytoplasm. The chain is Cilia- and flagella-associated protein 119 from Homo sapiens (Human).